The following is a 668-amino-acid chain: Neurexin-3-beta (668 aa).

Residues 1–35 form the signal peptide; the sequence is MHLRTNPSICPGRRPAWTLWMCSLFWGCIVSSVWS. The Extracellular portion of the chain corresponds to 36-593; the sequence is SSNVASSASS…EVVRESSSTT (558 aa). Positions 84–284 constitute a Laminin G-like domain; the sequence is ATYIFGKSGG…NPNIKINGSV (201 aa). The interval 510–529 is disordered; sequence TASSSTGMVPKLPAGKMNNR. A helical membrane pass occupies residues 594 to 614; the sequence is GMVVGIVAAAALCILILLYAM. Over 615-668 the chain is Cytoplasmic; that stretch reads YKYRNRDEGSYQVDETRNYISNSAQSNGTLMKEKQQSSKSGHKKQKNKDKEYYV. The interval 636 to 668 is disordered; that stretch reads NSAQSNGTLMKEKQQSSKSGHKKQKNKDKEYYV.

The protein belongs to the neurexin family. Post-translationally, processed by alpha-secretase leading to the formation of an extracellular soluble protein as well as a C-terminal membrane-embedded fragment (CTF). Proteolysis of these CTFs by gamma-secretase releases intracellular domains (ICDs) and extracellular peptides. Brain and arteries (at protein level).

It localises to the membrane. Functionally, neuronal cell surface protein that may be involved in cell recognition and cell adhesion. Plays a role in angiogenesis. This is Neurexin-3-beta (NRXN3) from Gallus gallus (Chicken).